A 366-amino-acid chain; its full sequence is Phospho-N-acetylmuramoyl-pentapeptide-transferase (366 aa).

10 helical membrane-spanning segments follow: residues Ala-27–Leu-47, Thr-71–Ala-91, Leu-93–Phe-113, Leu-134–Ile-154, Ala-174–Gly-194, Gly-205–Ala-225, Leu-245–Pro-265, Ala-268–Val-288, Ile-294–Val-314, and Gln-343–Leu-363.

The protein belongs to the glycosyltransferase 4 family. MraY subfamily. The cofactor is Mg(2+).

It localises to the cell inner membrane. The enzyme catalyses UDP-N-acetyl-alpha-D-muramoyl-L-alanyl-gamma-D-glutamyl-meso-2,6-diaminopimeloyl-D-alanyl-D-alanine + di-trans,octa-cis-undecaprenyl phosphate = di-trans,octa-cis-undecaprenyl diphospho-N-acetyl-alpha-D-muramoyl-L-alanyl-D-glutamyl-meso-2,6-diaminopimeloyl-D-alanyl-D-alanine + UMP. It participates in cell wall biogenesis; peptidoglycan biosynthesis. Its function is as follows. Catalyzes the initial step of the lipid cycle reactions in the biosynthesis of the cell wall peptidoglycan: transfers peptidoglycan precursor phospho-MurNAc-pentapeptide from UDP-MurNAc-pentapeptide onto the lipid carrier undecaprenyl phosphate, yielding undecaprenyl-pyrophosphoryl-MurNAc-pentapeptide, known as lipid I. The polypeptide is Phospho-N-acetylmuramoyl-pentapeptide-transferase (Allorhizobium ampelinum (strain ATCC BAA-846 / DSM 112012 / S4) (Agrobacterium vitis (strain S4))).